Here is a 401-residue protein sequence, read N- to C-terminus: Formate-dependent phosphoribosylglycinamide formyltransferase (401 aa).

N(1)-(5-phospho-beta-D-ribosyl)glycinamide contacts are provided by residues 22 to 23 and Glu82; that span reads EL. Residues Arg115, Lys157, 162–167, 197–200, and Glu205 each bind ATP; these read SSGKGQ and EGFV. The ATP-grasp domain maps to 120–315; sequence RLAAETLALP…EFELHARAIL (196 aa). Mg(2+) is bound by residues Glu274 and Glu286. Residues Asp293, Lys362, and 369 to 370 contribute to the N(1)-(5-phospho-beta-D-ribosyl)glycinamide site; that span reads RR.

Belongs to the PurK/PurT family. In terms of assembly, homodimer.

It carries out the reaction N(1)-(5-phospho-beta-D-ribosyl)glycinamide + formate + ATP = N(2)-formyl-N(1)-(5-phospho-beta-D-ribosyl)glycinamide + ADP + phosphate + H(+). The protein operates within purine metabolism; IMP biosynthesis via de novo pathway; N(2)-formyl-N(1)-(5-phospho-D-ribosyl)glycinamide from N(1)-(5-phospho-D-ribosyl)glycinamide (formate route): step 1/1. Functionally, involved in the de novo purine biosynthesis. Catalyzes the transfer of formate to 5-phospho-ribosyl-glycinamide (GAR), producing 5-phospho-ribosyl-N-formylglycinamide (FGAR). Formate is provided by PurU via hydrolysis of 10-formyl-tetrahydrofolate. This chain is Formate-dependent phosphoribosylglycinamide formyltransferase, found in Polaromonas naphthalenivorans (strain CJ2).